A 122-amino-acid polypeptide reads, in one-letter code: Large ribosomal subunit protein uL14 (122 aa).

Belongs to the universal ribosomal protein uL14 family. In terms of assembly, part of the 50S ribosomal subunit. Forms a cluster with proteins L3 and L19. In the 70S ribosome, L14 and L19 interact and together make contacts with the 16S rRNA in bridges B5 and B8.

Its function is as follows. Binds to 23S rRNA. Forms part of two intersubunit bridges in the 70S ribosome. The protein is Large ribosomal subunit protein uL14 of Ruegeria pomeroyi (strain ATCC 700808 / DSM 15171 / DSS-3) (Silicibacter pomeroyi).